The primary structure comprises 67 residues: (2R)-sulfolactate sulfo-lyase subunit alpha (67 aa).

In terms of assembly, (2R)-sulfolactate sulfo-lyase is composed of a SuyA and a SuyB subunit.

The protein resides in the cytoplasm. The catalysed reaction is (2R)-3-sulfolactate = sulfite + pyruvate + H(+). Functionally, together with SuyB, desulfonates sulfolactate to pyruvate and sulfite. This Paracoccus pantotrophus (Thiosphaera pantotropha) protein is (2R)-sulfolactate sulfo-lyase subunit alpha (suyA).